The following is a 62-amino-acid chain: MSSGTPSLGKRNKTPTHIRCRRCGRKAFNVKKGYCAACGFGRSRRLRKYRWSKKWKKKKNVH.

Positions 20, 23, 35, and 38 each coordinate Zn(2+). The C4-type zinc finger occupies 20–38; that stretch reads CRRCGRKAFNVKKGYCAAC.

The protein belongs to the eukaryotic ribosomal protein eL37 family. It depends on Zn(2+) as a cofactor.

In terms of biological role, binds to the 23S rRNA. The polypeptide is Large ribosomal subunit protein eL37 (rpl37e) (Pyrococcus abyssi (strain GE5 / Orsay)).